A 135-amino-acid chain; its full sequence is Small ribosomal subunit protein bS16 (135 aa).

The interval 94-135 (IGTEMETWQQRNDSRLKRGLDRKAIRRKRKKEAEAKEKESAG) is disordered. Basic and acidic residues-rich tracts occupy residues 105-116 (NDSRLKRGLDRK) and 124-135 (KEAEAKEKESAG).

This sequence belongs to the bacterial ribosomal protein bS16 family.

The sequence is that of Small ribosomal subunit protein bS16 from Chloroherpeton thalassium (strain ATCC 35110 / GB-78).